A 504-amino-acid chain; its full sequence is Procardosin-A (504 aa).

The signal sequence occupies residues 1–24; the sequence is MGTSIKANVLALFLFYLLSPTVFS. Positions 25–68 are excised as a propeptide; sequence VSDDGLIRIGLKKRKVDRIDQLRGRRALMEGNARKDFGFRGTVR. The Peptidase A1 domain maps to 85 to 501; it reads YFGEIGIGTP…DYGNLLVGFA (417 aa). Asp-103 is a catalytic residue. An intrachain disulfide couples Cys-116 to Cys-122. A glycan (N-linked (GlcNAc...) asparagine) is linked at Asn-139. Residues 246–248 carry the RGD motif motif; sequence RGD. Residues Cys-277 and Cys-281 are joined by a disulfide bond. Asp-286 is an active-site residue. A propeptide spans 310-414 (plant-specific insert); sequence GVMNQQCKTV…YANELCEHLS (105 aa). The Saposin B-type domain occupies 311–416; that stretch reads VMNQQCKTVV…NELCEHLSTS (106 aa). 4 disulfides stabilise this stretch: Cys-316/Cys-410, Cys-341/Cys-382, Cys-347/Cys-379, and Cys-424/Cys-461. N-linked (GlcNAc...) asparagine glycosylation is present at Asn-432. A KGE motif motif is present at residues 455 to 457; it reads KGE.

Belongs to the peptidase A1 family. In terms of assembly, heterodimer of a light chain and a heavy chain. An intermediate form (35 kDa and 30 kDa subunits) is produced first, and undergoes proteolytic processing to remove the internal plant-specific insert (PSI) and the propeptide. There is some heterogeniety at the cleavage site. Interacts (via RGD or KGE motifs) with PLD1 (via C2 domain). Post-translationally, N-glycosylated. Glycans found at Asn-139 include approximately 6% oligomannose, 82% oligosaccharides of the plant modified type with proximal fucose but without xylose and 6% oligosaccharides of the plant modified type with proximal fucose and xylose. Glycans found at Asn-432 include 14% oligosaccharides of the plant modified type with proximal fucose but without xylose and 86% oligosaccharides of the plant modified type with proximal fucose and xylose. In terms of tissue distribution, detected only in pistils, not in seeds, roots, midribs, bracts, stamens, pollen, vascular or supporting tissues. Detected in seeds. High amounts are detected in the broad outer region of the upper portion of the stigma, towards the lower portion of the stigma it accumulates at the periphery. Within the stigma, expressed mainly in the epidermic papillae, lower levels are found in the cortical parenchyma. Present mainly in epidermal cells within the stye (at protein level). Expressed in young flower buds, and at lower levels in seeds, pollen and bracteas, but not in roots or leaves.

The protein resides in the microsome membrane. It localises to the protein storage vacuole. It is found in the secreted. The protein localises to the cell wall. Its subcellular location is the extracellular space. The protein resides in the extracellular matrix. With respect to regulation, inhibited by the specific aspartic proteinase inhibitors diazoacetyl-noleucine methyl ester and pepstatin. Its function is as follows. Aspartic proteinase with a high preference for bonds between hydrophobic residues. Cleaves alpha-lactalbumin but not beta-lactoglobulin. The protein is Procardosin-A of Cynara cardunculus (Cardoon).